Reading from the N-terminus, the 203-residue chain is Cold-regulated 413 plasma membrane protein 2 (203 aa).

Over 1–43 the chain is Extracellular; sequence MGRMDYLAMKTDDVDTVALVNSDMEELKVAAKKLFSDVSKLGG. The chain crosses the membrane as a helical span at residues 44-64; sequence LGFGVSFLKFLASFAAIYLLI. The Cytoplasmic portion of the chain corresponds to 65–74; that stretch reads LDRTNWKTKM. Residues 75 to 95 form a helical membrane-spanning segment; sequence LTSLLIPYIFLSLPSVIFNFL. Topologically, residues 96–98 are extracellular; that stretch reads SGD. The helical transmembrane segment at 99-119 threads the bilayer; the sequence is VGKWIAFVAVVLRLFFPKHFP. Position 120 (Asp-120) is a topological domain, cytoplasmic. The helical transmembrane segment at 121–141 threads the bilayer; that stretch reads WLEMPGSLILLLVVSPHFLAH. Topologically, residues 142 to 144 are extracellular; sequence HIR. Residues 145–165 form a helical membrane-spanning segment; sequence GTWIGTVISLFIGCYLLQEHI. The Cytoplasmic segment spans residues 166-179; that stretch reads RASGGFRNSFTQPR. The helical transmembrane segment at 180-200 threads the bilayer; that stretch reads GVSNTLGIILLLVYPVWALIV. The Extracellular portion of the chain corresponds to 201 to 203; that stretch reads RVM.

This sequence belongs to the Cold-regulated 413 protein family.

The protein localises to the cell membrane. The polypeptide is Cold-regulated 413 plasma membrane protein 2 (COR413PM2) (Arabidopsis thaliana (Mouse-ear cress)).